A 60-amino-acid chain; its full sequence is DNA gyrase inhibitor YacG (60 aa).

Cys-3, Cys-6, Cys-18, and Cys-22 together coordinate Zn(2+). The interval 38 to 60 is disordered; sequence PASSEDEEEPLDQEAETPVAPRH. Over residues 41-52 the composition is skewed to acidic residues; sequence SEDEEEPLDQEA.

The protein belongs to the DNA gyrase inhibitor YacG family. As to quaternary structure, interacts with GyrB. Zn(2+) serves as cofactor.

In terms of biological role, inhibits all the catalytic activities of DNA gyrase by preventing its interaction with DNA. Acts by binding directly to the C-terminal domain of GyrB, which probably disrupts DNA binding by the gyrase. The polypeptide is DNA gyrase inhibitor YacG (Ruegeria pomeroyi (strain ATCC 700808 / DSM 15171 / DSS-3) (Silicibacter pomeroyi)).